Here is a 485-residue protein sequence, read N- to C-terminus: MGMLDVSLHKITQKSQSLLHRTADRHLRLAVTGLSGAGKTAFITGLVNQLLNSGAVSTVSHSRQNGLPLWQVSREQRLLGVKRAMQPDLEIASFDYQGAMLALTSNPPTWPESTRTISELRLAIKYRPEKGLLAKFADAATLYLDIVDYPGEWLLDLPMLRQSYIEWCTTQQQRIAVLKSSPLYAGFETSLNALNLAAMADESELKRLADQYQQLLHDLVHVQGYYQAQPGRMLLPGEWQGAPLLAFFPLLSVTNAQWSNLKQSDKHSAFHVLEKRYQEYVAKVVKPFYKQHFAGFDRQVVLVDCFSALNRGKSQFEDMGAALNAIMESFQYGQSSYLRRLFAPRIDRLLFAASKVDHVTRDQQSHVLSLLTDMLKHSQHFAGFEGCKVETMAISAIKATRHGMVTTQEGDVEVVQGTGLNGQALTLFPGEVPTRLPEPDFWREQGFNFIGFAPPDNTNVDPSSVHFDHIRLDHLLQYLVGDKLE.

Positions 33-40 match the Walker A motif motif; the sequence is GLSGAGKT. S35, G36, G38, K39, T40, A41, W110, S113, T114, R115, K355, D357, and H358 together coordinate GTP. GDP is bound by residues G36, G38, K39, T40, A41, W110, S113, and T114. Residues K355, D357, H358, S395, A396, and I397 each contribute to the GDP site. I397 is a GTP binding site.

Monomer in solution. Mg(2+) is required as a cofactor.

The catalysed reaction is GTP + H2O = GDP + phosphate + H(+). Its activity is regulated as follows. Alternates between an inactive form bound to GDP and an active form bound to GTP. Likely activated by a guanine nucleotide-exchange factor (GEF). Its function is as follows. Binds GTP and GDP. Has intrinsic GTPase activity. Does not hydrolyze ATP. May act as a transducer of stress responses. This chain is Ras-like GTPase YcjX, found in Shewanella oneidensis (strain ATCC 700550 / JCM 31522 / CIP 106686 / LMG 19005 / NCIMB 14063 / MR-1).